The following is a 169-amino-acid chain: Peptide deformylase (169 aa).

Residues Cys-94 and His-136 each contribute to the Fe cation site. Residue Glu-137 is part of the active site. His-140 contributes to the Fe cation binding site.

This sequence belongs to the polypeptide deformylase family. Requires Fe(2+) as cofactor.

The catalysed reaction is N-terminal N-formyl-L-methionyl-[peptide] + H2O = N-terminal L-methionyl-[peptide] + formate. In terms of biological role, removes the formyl group from the N-terminal Met of newly synthesized proteins. Requires at least a dipeptide for an efficient rate of reaction. N-terminal L-methionine is a prerequisite for activity but the enzyme has broad specificity at other positions. This is Peptide deformylase from Phenylobacterium zucineum (strain HLK1).